Reading from the N-terminus, the 349-residue chain is tRNA pseudouridine synthase D (349 aa).

Phe-27 provides a ligand contact to substrate. Catalysis depends on Asp-80, which acts as the Nucleophile. Asn-129 contacts substrate. The TRUD domain occupies 155 to 303 (GVPNYFGAQR…VEAARRAMLL (149 aa)). Phe-329 lines the substrate pocket.

The protein belongs to the pseudouridine synthase TruD family.

It catalyses the reaction uridine(13) in tRNA = pseudouridine(13) in tRNA. In terms of biological role, responsible for synthesis of pseudouridine from uracil-13 in transfer RNAs. This chain is tRNA pseudouridine synthase D, found in Escherichia coli O6:H1 (strain CFT073 / ATCC 700928 / UPEC).